The primary structure comprises 432 residues: Glutamate-1-semialdehyde 2,1-aminomutase (432 aa).

An N6-(pyridoxal phosphate)lysine modification is found at Lys-271.

This sequence belongs to the class-III pyridoxal-phosphate-dependent aminotransferase family. HemL subfamily. As to quaternary structure, homodimer. It depends on pyridoxal 5'-phosphate as a cofactor.

It localises to the cytoplasm. The catalysed reaction is (S)-4-amino-5-oxopentanoate = 5-aminolevulinate. Its pathway is porphyrin-containing compound metabolism; protoporphyrin-IX biosynthesis; 5-aminolevulinate from L-glutamyl-tRNA(Glu): step 2/2. The protein operates within porphyrin-containing compound metabolism; chlorophyll biosynthesis. The polypeptide is Glutamate-1-semialdehyde 2,1-aminomutase (Prochlorococcus marinus (strain NATL2A)).